Here is a 369-residue protein sequence, read N- to C-terminus: Naringenin,2-oxoglutarate 3-dioxygenase (369 aa).

Positions cysteine 193–proline 297 constitute a Fe2OG dioxygenase domain. 3 residues coordinate Fe cation: histidine 220, aspartate 222, and histidine 278. Arginine 288 serves as a coordination point for 2-oxoglutarate.

Belongs to the iron/ascorbate-dependent oxidoreductase family. Fe(2+) is required as a cofactor. L-ascorbate serves as cofactor.

The catalysed reaction is a (2S)-flavan-4-one + 2-oxoglutarate + O2 = a (2R,3R)-dihydroflavonol + succinate + CO2. Its pathway is secondary metabolite biosynthesis; flavonoid biosynthesis. Catalyzes the 3-beta-hydroxylation of 2S-flavanones to 2R,3R-dihydroflavonols which are intermediates in the biosynthesis of flavonols, anthocyanidins, catechins and proanthocyanidins in plants. The chain is Naringenin,2-oxoglutarate 3-dioxygenase (AN3) from Petunia hybrida (Petunia).